Consider the following 293-residue polypeptide: Formamidopyrimidine-DNA glycosylase (293 aa).

Pro-2 serves as the catalytic Schiff-base intermediate with DNA. Catalysis depends on Glu-3, which acts as the Proton donor. The active-site Proton donor; for beta-elimination activity is Lys-58. 3 residues coordinate DNA: His-104, Arg-123, and Lys-166. The FPG-type zinc finger occupies 257 to 293 (QVYDREGEPCRTDGCGGVVKRFVQNGRSTFWCPKCQR). Arg-283 serves as the catalytic Proton donor; for delta-elimination activity.

The protein belongs to the FPG family. As to quaternary structure, monomer. It depends on Zn(2+) as a cofactor.

The enzyme catalyses Hydrolysis of DNA containing ring-opened 7-methylguanine residues, releasing 2,6-diamino-4-hydroxy-5-(N-methyl)formamidopyrimidine.. It carries out the reaction 2'-deoxyribonucleotide-(2'-deoxyribose 5'-phosphate)-2'-deoxyribonucleotide-DNA = a 3'-end 2'-deoxyribonucleotide-(2,3-dehydro-2,3-deoxyribose 5'-phosphate)-DNA + a 5'-end 5'-phospho-2'-deoxyribonucleoside-DNA + H(+). In terms of biological role, involved in base excision repair of DNA damaged by oxidation or by mutagenic agents. Acts as a DNA glycosylase that recognizes and removes damaged bases. Has a preference for oxidized purines, such as 7,8-dihydro-8-oxoguanine (8-oxoG). Has AP (apurinic/apyrimidinic) lyase activity and introduces nicks in the DNA strand. Cleaves the DNA backbone by beta-delta elimination to generate a single-strand break at the site of the removed base with both 3'- and 5'-phosphates. The chain is Formamidopyrimidine-DNA glycosylase from Bradyrhizobium sp. (strain BTAi1 / ATCC BAA-1182).